Here is a 101-residue protein sequence, read N- to C-terminus: Phosphoribosyl-ATP pyrophosphatase (101 aa).

The protein belongs to the PRA-PH family.

It is found in the cytoplasm. It catalyses the reaction 1-(5-phospho-beta-D-ribosyl)-ATP + H2O = 1-(5-phospho-beta-D-ribosyl)-5'-AMP + diphosphate + H(+). The protein operates within amino-acid biosynthesis; L-histidine biosynthesis; L-histidine from 5-phospho-alpha-D-ribose 1-diphosphate: step 2/9. The polypeptide is Phosphoribosyl-ATP pyrophosphatase (Natronomonas pharaonis (strain ATCC 35678 / DSM 2160 / CIP 103997 / JCM 8858 / NBRC 14720 / NCIMB 2260 / Gabara) (Halobacterium pharaonis)).